Consider the following 295-residue polypeptide: Probable WRKY transcription factor 46 (295 aa).

Residues Q98–I166 constitute a DNA-binding region (WRKY).

It belongs to the WRKY group III family. As to quaternary structure, binds to BZR2/BES1 to cooperatively regulate the expression of target genes. Post-translationally, phosphorylated and destabilized by ASK7/BIN2. In terms of tissue distribution, expressed in guard cells, hypocotyls, and in the vascular tissues of cotyledon and root. Mostly expressed in roots, at lower levels in leaves and petioles, and, to a lower extent, in stems, flowers and siliques.

The protein localises to the nucleus. Functionally, transcription factor involved in the regulation of osmotic stress responses and stomatal movement. Interacts specifically with the W box (5'-(T)TGAC[CT]-3'), a frequently occurring elicitor-responsive cis-acting element. Positive regulator of EDS1-dependent defense against E.amylovora. Together with WRKY70 and WRKY53, promotes resistance to P.syringae, probably by enhancing salicylic acid (SA)- dependent genes. Contributes to the suppression of jasmonic acid (MeJA)-induced expression of PDF1.2. Together with WRKY54 and WRKY70, promotes brassinosteroid (BR)-regulated plant growth but prevent drought response by modulating gene expression. In Arabidopsis thaliana (Mouse-ear cress), this protein is Probable WRKY transcription factor 46 (WRKY46).